Reading from the N-terminus, the 492-residue chain is Adenylyltransferase and sulfurtransferase uba4 (492 aa).

Residues Gly-99, Asp-120, 127-131 (SNLHR), Lys-144, and 188-189 (DN) each bind ATP. 2 residues coordinate Zn(2+): Cys-237 and Cys-240. Cys-254 acts as the Glycyl thioester intermediate; for adenylyltransferase activity in catalysis. 2 residues coordinate Zn(2+): Cys-317 and Cys-320. The region spanning 378–490 (GSKEPTIIDV…WREQIDPDWP (113 aa)) is the Rhodanese domain. Catalysis depends on Cys-445, which acts as the Cysteine persulfide intermediate; for sulfurtransferase activity.

In the N-terminal section; belongs to the HesA/MoeB/ThiF family. UBA4 subfamily. Zn(2+) is required as a cofactor.

It localises to the cytoplasm. It is found in the cytosol. It carries out the reaction [molybdopterin-synthase sulfur-carrier protein]-C-terminal Gly-Gly + ATP + H(+) = [molybdopterin-synthase sulfur-carrier protein]-C-terminal Gly-Gly-AMP + diphosphate. The catalysed reaction is [molybdopterin-synthase sulfur-carrier protein]-C-terminal Gly-Gly-AMP + S-sulfanyl-L-cysteinyl-[cysteine desulfurase] + AH2 = [molybdopterin-synthase sulfur-carrier protein]-C-terminal-Gly-aminoethanethioate + L-cysteinyl-[cysteine desulfurase] + A + AMP + 2 H(+). It participates in tRNA modification; 5-methoxycarbonylmethyl-2-thiouridine-tRNA biosynthesis. The protein operates within cofactor biosynthesis; molybdopterin biosynthesis. Functionally, plays a central role in 2-thiolation of mcm(5)S(2)U at tRNA wobble positions of cytosolic tRNA(Lys), tRNA(Glu) and tRNA(Gln). Also essential during biosynthesis of the molybdenum cofactor. Acts by mediating the C-terminal thiocarboxylation of sulfur carriers urm1 and mocs2a. Its N-terminus first activates urm1 and mocs2a as acyl-adenylates (-COAMP), then the persulfide sulfur on the catalytic cysteine is transferred to urm1 and mocs2a to form thiocarboxylation (-COSH) of their C-terminus. The reaction probably involves hydrogen sulfide that is generated from the persulfide intermediate and that acts as a nucleophile towards urm1 and mocs2a. Subsequently, a transient disulfide bond is formed. Does not use thiosulfate as sulfur donor; nfs1 probably acting as a sulfur donor for thiocarboxylation reactions. This chain is Adenylyltransferase and sulfurtransferase uba4, found in Aspergillus clavatus (strain ATCC 1007 / CBS 513.65 / DSM 816 / NCTC 3887 / NRRL 1 / QM 1276 / 107).